Consider the following 440-residue polypeptide: Tryptophan aminotransferase-related protein 2 (440 aa).

A helical membrane pass occupies residues 7-26; it reads FLSWRNMLVLSLAINFSLIL. Pyridoxal 5'-phosphate-binding positions include Y112, 154–155, N222, 242–245, 265–268, and R276; these read ST, DLAY, and TASK. Residue K268 is modified to N6-(pyridoxal phosphate)lysine.

The protein belongs to the alliinase family. Requires pyridoxal 5'-phosphate as cofactor. As to expression, expressed in roots, cotyledons and in the apical parts of hypocotyls. In roots, restricted to the provasculature of meristematic regions. Detected on the inner side of the apical hooks.

The protein localises to the membrane. It catalyses the reaction L-tryptophan + 2-oxoglutarate = indole-3-pyruvate + L-glutamate. The catalysed reaction is L-tryptophan + pyruvate = indole-3-pyruvate + L-alanine. It participates in plant hormone metabolism; auxin biosynthesis. Inhibited by L-kynurenine. Functionally, involved in auxin production. Both TAA1 and TAR2 are required for maintaining proper auxin levels in roots, while TAA1, TAR1 and TAR2 are required for proper embryo patterning. Involved in the maintenance of the root stem cell niches. This Arabidopsis thaliana (Mouse-ear cress) protein is Tryptophan aminotransferase-related protein 2 (TAR2).